The chain runs to 206 residues: GTP-binding protein YPT1 (206 aa).

Residue Met1 is modified to N-acetylmethionine. GTP contacts are provided by residues Ser17 to Cys23, Tyr33 to Thr40, Gly66, and Asn121 to Asp124. Cys23 carries S-palmitoyl cysteine lipidation. The Effector region motif lies at Tyr37–Phe45. The tract at residues Asp63–Gly80 is interaction with GDI1. Residue Cys123 is the site of S-palmitoyl cysteine attachment. A Glycyl lysine isopeptide (Lys-Gly) (interchain with G-Cter in ubiquitin) cross-link involves residue Lys144. Ala152–Leu153 is a GTP binding site. Phosphoserine is present on residues Ser172 and Ser174. Residues Met173–Cys206 are disordered. The interval Gly189–Gly195 is interaction with GDI1. Residues Cys205 and Cys206 are each lipidated (S-geranylgeranyl cysteine).

Belongs to the small GTPase superfamily. Rab family. Forms a complex with the Rab escort protein (REP) MRS6, which is recognized by Rab geranylgeranyltransferase BET2-BET4. Interacts with the Rab GDP dissociation inhibitor GDI1, which can retrieve from and deliver to membranes the GDP-bound and prenylated form of YPT1. Interacts with YIP1, which is required for proper membrane targeting of prenylated YPT1. Interacts with YIF1, YIP3, YIP4 and YIP5. In terms of processing, prenylation is required for interaction with GDI1 and YIP1.

Its subcellular location is the endoplasmic reticulum membrane. It localises to the golgi apparatus membrane. It is found in the cytoplasm. The protein resides in the preautophagosomal structure membrane. Rab activation is generally mediated by a guanine exchange factor (GEF), while inactivation through hydrolysis of bound GTP is catalyzed by a GTPase activating protein (GAP). YPT1 is activated by the GEFs DSS4 and TRAPP complex, and inactivated by GAPs GYP1, GYP5 and GYP8. The small GTPases Rab are key regulators of intracellular membrane trafficking, from the formation of transport vesicles to their fusion with membranes. Rabs cycle between an inactive GDP-bound form and an active GTP-bound form that is able to recruit to membranes different set of downstream effectors directly responsible for vesicle formation, movement, tethering and fusion. YPT1 regulates the trafficking of secretory vesicles from the endoplasmic reticulum (ER) to the Golgi. Vesicular transport depends on shuttling of YPT1 between membrane and cytosol by GDI1, probably by recycling it to its membrane of origin after a vesicle fusion event. Plays a role in the initial events of the autophagic vacuole development which take place at specialized regions of the endoplasmic reticulum. Also involved in the recycling of membrane proteins. The sequence is that of GTP-binding protein YPT1 (YPT1) from Saccharomyces cerevisiae (strain ATCC 204508 / S288c) (Baker's yeast).